Reading from the N-terminus, the 313-residue chain is UPF0761 membrane protein VV0203 (313 aa).

A run of 6 helical transmembrane segments spans residues 41–61 (YLAYITLLSIVPMLTVLLSIL), 104–124 (MTAVGAAFLFVAALMLISNID), 139–159 (AVFSFSMYWMVLTLGPILVGA), 185–205 (LLRWLPFILSSSAFVGLYLLV), 215–235 (AVVGAMIAAVLFELSKKGFAA), and 249–269 (ALAAIPILFVWVYLCWLIVLI). The interval 293–313 (LPNNDTELEKDTQRDRFDSES) is disordered. The segment covering 299–313 (ELEKDTQRDRFDSES) has biased composition (basic and acidic residues).

Belongs to the UPF0761 family.

It localises to the cell inner membrane. The chain is UPF0761 membrane protein VV0203 from Vibrio vulnificus (strain YJ016).